A 37-amino-acid chain; its full sequence is Large ribosomal subunit protein bL36 (37 aa).

It belongs to the bacterial ribosomal protein bL36 family.

In Mesomycoplasma hyopneumoniae (strain 7448) (Mycoplasma hyopneumoniae), this protein is Large ribosomal subunit protein bL36.